Consider the following 236-residue polypeptide: Small ribosomal subunit protein eS6 (236 aa).

Phosphoserine is present on residues Ser-232 and Ser-233.

This sequence belongs to the eukaryotic ribosomal protein eS6 family. Post-translationally, phosphorylated.

In Candida glabrata (strain ATCC 2001 / BCRC 20586 / JCM 3761 / NBRC 0622 / NRRL Y-65 / CBS 138) (Yeast), this protein is Small ribosomal subunit protein eS6 (RPS6A).